The sequence spans 185 residues: Threonylcarbamoyl-AMP synthase (185 aa).

The YrdC-like domain occupies 4–185; the sequence is SFRVQQAARE…LATGEVVRPG (182 aa).

The protein belongs to the SUA5 family. TsaC subfamily.

The protein resides in the cytoplasm. The catalysed reaction is L-threonine + hydrogencarbonate + ATP = L-threonylcarbamoyladenylate + diphosphate + H2O. Its function is as follows. Required for the formation of a threonylcarbamoyl group on adenosine at position 37 (t(6)A37) in tRNAs that read codons beginning with adenine. Catalyzes the conversion of L-threonine, HCO(3)(-)/CO(2) and ATP to give threonylcarbamoyl-AMP (TC-AMP) as the acyladenylate intermediate, with the release of diphosphate. This chain is Threonylcarbamoyl-AMP synthase, found in Pseudomonas putida (strain GB-1).